The sequence spans 257 residues: 5'-nucleotidase SurE (257 aa).

A divalent metal cation is bound by residues Asp-9, Asp-10, Ser-40, and Asn-93.

Belongs to the SurE nucleotidase family. Requires a divalent metal cation as cofactor.

It localises to the cytoplasm. It catalyses the reaction a ribonucleoside 5'-phosphate + H2O = a ribonucleoside + phosphate. Nucleotidase that shows phosphatase activity on nucleoside 5'-monophosphates. This Campylobacter hominis (strain ATCC BAA-381 / DSM 21671 / CCUG 45161 / LMG 19568 / NCTC 13146 / CH001A) protein is 5'-nucleotidase SurE.